The primary structure comprises 255 residues: 1-(5-phosphoribosyl)-5-[(5-phosphoribosylamino)methylideneamino] imidazole-4-carboxamide isomerase (255 aa).

Residue D8 is the Proton acceptor of the active site. Residue D129 is the Proton donor of the active site.

It belongs to the HisA/HisF family.

Its subcellular location is the cytoplasm. The enzyme catalyses 1-(5-phospho-beta-D-ribosyl)-5-[(5-phospho-beta-D-ribosylamino)methylideneamino]imidazole-4-carboxamide = 5-[(5-phospho-1-deoxy-D-ribulos-1-ylimino)methylamino]-1-(5-phospho-beta-D-ribosyl)imidazole-4-carboxamide. It participates in amino-acid biosynthesis; L-histidine biosynthesis; L-histidine from 5-phospho-alpha-D-ribose 1-diphosphate: step 4/9. The chain is 1-(5-phosphoribosyl)-5-[(5-phosphoribosylamino)methylideneamino] imidazole-4-carboxamide isomerase from Parasynechococcus marenigrum (strain WH8102).